Consider the following 453-residue polypeptide: tRNA modification GTPase MnmE (453 aa).

Positions 22, 79, and 119 each coordinate (6S)-5-formyl-5,6,7,8-tetrahydrofolate. In terms of domain architecture, TrmE-type G spans 215–376; the sequence is GMKVVIAGRP…LRNHLKECMG (162 aa). Asn225 serves as a coordination point for K(+). Residues 225-230, 244-250, 269-272, and 334-337 contribute to the GTP site; these read NAGKSS, TDIAGTT, DTAG, and NKAD. Ser229 is a binding site for Mg(2+). K(+)-binding residues include Thr244, Ile246, and Thr249. Thr250 serves as a coordination point for Mg(2+). A (6S)-5-formyl-5,6,7,8-tetrahydrofolate-binding site is contributed by Lys453.

It belongs to the TRAFAC class TrmE-Era-EngA-EngB-Septin-like GTPase superfamily. TrmE GTPase family. In terms of assembly, homodimer. Heterotetramer of two MnmE and two MnmG subunits. It depends on K(+) as a cofactor.

It is found in the cytoplasm. Functionally, exhibits a very high intrinsic GTPase hydrolysis rate. Involved in the addition of a carboxymethylaminomethyl (cmnm) group at the wobble position (U34) of certain tRNAs, forming tRNA-cmnm(5)s(2)U34. The protein is tRNA modification GTPase MnmE of Vibrio vulnificus (strain CMCP6).